We begin with the raw amino-acid sequence, 497 residues long: Cysteine--tRNA ligase (497 aa).

Cys46 contributes to the Zn(2+) binding site. The 'HIGH' region signature appears at 48–58 (PTVYSDAHLGH). Zn(2+) is bound by residues Cys237, His262, and Glu266. Residues 293–297 (KMSKS) carry the 'KMSKS' region motif. Lys296 contacts ATP.

This sequence belongs to the class-I aminoacyl-tRNA synthetase family. As to quaternary structure, monomer. It depends on Zn(2+) as a cofactor.

It localises to the cytoplasm. The enzyme catalyses tRNA(Cys) + L-cysteine + ATP = L-cysteinyl-tRNA(Cys) + AMP + diphosphate. This Deinococcus geothermalis (strain DSM 11300 / CIP 105573 / AG-3a) protein is Cysteine--tRNA ligase.